Consider the following 61-residue polypeptide: Photosystem II reaction center protein K (61 aa).

Positions 1–24 are excised as a propeptide; sequence MPNILSLTCICFNSVLYPTSFFFA. The chain crosses the membrane as a helical span at residues 32–52; the sequence is IFNPIVDIMPVIPLFFFLLAF.

Belongs to the PsbK family. As to quaternary structure, PSII is composed of 1 copy each of membrane proteins PsbA, PsbB, PsbC, PsbD, PsbE, PsbF, PsbH, PsbI, PsbJ, PsbK, PsbL, PsbM, PsbT, PsbX, PsbY, PsbZ, Psb30/Ycf12, at least 3 peripheral proteins of the oxygen-evolving complex and a large number of cofactors. It forms dimeric complexes. Detected in both etioplasts and green leaves; PSII is only assembled in green leaves.

It is found in the plastid. Its subcellular location is the chloroplast thylakoid membrane. In terms of biological role, one of the components of the core complex of photosystem II (PSII). PSII is a light-driven water:plastoquinone oxidoreductase that uses light energy to abstract electrons from H(2)O, generating O(2) and a proton gradient subsequently used for ATP formation. It consists of a core antenna complex that captures photons, and an electron transfer chain that converts photonic excitation into a charge separation. This Hordeum vulgare (Barley) protein is Photosystem II reaction center protein K.